Reading from the N-terminus, the 230-residue chain is Ribosomal RNA large subunit methyltransferase E (230 aa).

Over residues 1 to 13 the composition is skewed to gly residues; it reads MSGSGGKGGGRGG. The segment at 1 to 22 is disordered; it reads MSGSGGKGGGRGGLHVRVKTAK. S-adenosyl-L-methionine is bound by residues Gly-81, Trp-83, Asp-100, Asp-116, and Asp-140. Lys-180 functions as the Proton acceptor in the catalytic mechanism.

Belongs to the class I-like SAM-binding methyltransferase superfamily. RNA methyltransferase RlmE family.

The protein resides in the cytoplasm. The catalysed reaction is uridine(2552) in 23S rRNA + S-adenosyl-L-methionine = 2'-O-methyluridine(2552) in 23S rRNA + S-adenosyl-L-homocysteine + H(+). In terms of biological role, specifically methylates the uridine in position 2552 of 23S rRNA at the 2'-O position of the ribose in the fully assembled 50S ribosomal subunit. The chain is Ribosomal RNA large subunit methyltransferase E from Sphingopyxis alaskensis (strain DSM 13593 / LMG 18877 / RB2256) (Sphingomonas alaskensis).